The sequence spans 279 residues: Phosphatidylglycerol--prolipoprotein diacylglyceryl transferase (279 aa).

7 helical membrane passes run 25–45 (WYGL…KFFV), 60–80 (YFIW…ILIY), 103–123 (FVGI…IATI), 133–153 (LWSL…FGRI), 181–201 (PSQL…LYFY), 209–229 (GELI…TEFL), and 236–256 (IGYF…MLIL). Arg152 is a binding site for a 1,2-diacyl-sn-glycero-3-phospho-(1'-sn-glycerol).

Belongs to the Lgt family.

The protein localises to the cell inner membrane. It catalyses the reaction L-cysteinyl-[prolipoprotein] + a 1,2-diacyl-sn-glycero-3-phospho-(1'-sn-glycerol) = an S-1,2-diacyl-sn-glyceryl-L-cysteinyl-[prolipoprotein] + sn-glycerol 1-phosphate + H(+). It functions in the pathway protein modification; lipoprotein biosynthesis (diacylglyceryl transfer). Catalyzes the transfer of the diacylglyceryl group from phosphatidylglycerol to the sulfhydryl group of the N-terminal cysteine of a prolipoprotein, the first step in the formation of mature lipoproteins. The sequence is that of Phosphatidylglycerol--prolipoprotein diacylglyceryl transferase from Campylobacter hominis (strain ATCC BAA-381 / DSM 21671 / CCUG 45161 / LMG 19568 / NCTC 13146 / CH001A).